The following is a 528-amino-acid chain: Major facilitator superfamily multidrug transporter mdr3 (528 aa).

Positions 1–37 (MLAMAASAEETNRQSNAGRRSVISPSEAPPEAEQSDV) are disordered. Transmembrane regions (helical) follow at residues 50–70 (FILILCSTQLFVQGAFGYILI), 91–111 (WHVGGYSLTVGTFILIAGKLG), 119–139 (ILVLGWAWFGVWSVIGGCSAF), 149–169 (ARALQGIGPALLLPNALAIAG), 180–200 (MIFSAFAVAAPLGCFTAGVVG), 211–231 (WVMWTYSIGCFIIAAVGLWVI), and 241–261 (AATLQFDYIGSVLGVAGLLLL). An N-linked (GlcNAc...) asparagine glycan is attached at Asn262. 5 helical membrane-spanning segments follow: residues 272-292 (GWSTPYVYVLLIGGFLVLGLF), 340-360 (VITSGWLMAIACAAFLGGCIL), 375-395 (FWSFVIMAWGMDISFPASTTI), 410-430 (SLVNTVINYSIAIGLGIAGTV), and 448-468 (ALWSSVGLAALAFGIALVFAV).

The protein belongs to the major facilitator superfamily.

It localises to the cell membrane. In terms of biological role, major facilitator superfamily transporter that confers resistance to azoles such as itraconazole. The sequence is that of Major facilitator superfamily multidrug transporter mdr3 from Aspergillus fumigatus (strain ATCC MYA-4609 / CBS 101355 / FGSC A1100 / Af293) (Neosartorya fumigata).